The following is a 275-amino-acid chain: Large ribosomal subunit protein uL2 (275 aa).

A disordered region spans residues 223–260 (VAMNPVDHPHGGGEGRTSGGRHPVSPWGLPTKGYKTRS).

This sequence belongs to the universal ribosomal protein uL2 family. As to quaternary structure, part of the 50S ribosomal subunit. Forms a bridge to the 30S subunit in the 70S ribosome.

Its function is as follows. One of the primary rRNA binding proteins. Required for association of the 30S and 50S subunits to form the 70S ribosome, for tRNA binding and peptide bond formation. It has been suggested to have peptidyltransferase activity; this is somewhat controversial. Makes several contacts with the 16S rRNA in the 70S ribosome. This is Large ribosomal subunit protein uL2 from Legionella pneumophila (strain Paris).